The sequence spans 621 residues: UvrABC system protein C (621 aa).

The 80-residue stretch at Thr-11–Ile-90 folds into the GIY-YIG domain. Residues Lys-200–Thr-235 form the UVR domain.

Belongs to the UvrC family. In terms of assembly, interacts with UvrB in an incision complex.

The protein localises to the cytoplasm. Its function is as follows. The UvrABC repair system catalyzes the recognition and processing of DNA lesions. UvrC both incises the 5' and 3' sides of the lesion. The N-terminal half is responsible for the 3' incision and the C-terminal half is responsible for the 5' incision. In Lawsonia intracellularis (strain PHE/MN1-00), this protein is UvrABC system protein C.